The chain runs to 360 residues: Peptide chain release factor 1 (360 aa).

Position 235 is an N5-methylglutamine (Q235). The tract at residues 285–313 (KRQQAEASTRRNLLGSGDRSDRNRTYNFP) is disordered.

This sequence belongs to the prokaryotic/mitochondrial release factor family. In terms of processing, methylated by PrmC. Methylation increases the termination efficiency of RF1.

It is found in the cytoplasm. Its function is as follows. Peptide chain release factor 1 directs the termination of translation in response to the peptide chain termination codons UAG and UAA. The sequence is that of Peptide chain release factor 1 from Enterobacter sp. (strain 638).